The sequence spans 313 residues: Thiamine thiazole synthase (313 aa).

Substrate-binding positions include A71, 92–93 (EA), G100, and V165. C199 bears the 2,3-didehydroalanine (Cys) mark. Substrate is bound by residues D201, H216, M268, and 278-280 (RMG).

Belongs to the THI4 family. In terms of assembly, homooctamer. It depends on Fe cation as a cofactor. During the catalytic reaction, a sulfide is transferred from Cys-199 to a reaction intermediate, generating a dehydroalanine residue.

The protein localises to the cytoplasm. It is found in the nucleus. The catalysed reaction is [ADP-thiazole synthase]-L-cysteine + glycine + NAD(+) = [ADP-thiazole synthase]-dehydroalanine + ADP-5-ethyl-4-methylthiazole-2-carboxylate + nicotinamide + 3 H2O + 2 H(+). Its function is as follows. Involved in biosynthesis of the thiamine precursor thiazole. Catalyzes the conversion of NAD and glycine to adenosine diphosphate 5-(2-hydroxyethyl)-4-methylthiazole-2-carboxylic acid (ADT), an adenylated thiazole intermediate. The reaction includes an iron-dependent sulfide transfer from a conserved cysteine residue of the protein to a thiazole intermediate. The enzyme can only undergo a single turnover, which suggests it is a suicide enzyme. May have additional roles in adaptation to various stress conditions and in DNA damage tolerance. The sequence is that of Thiamine thiazole synthase from Coprinopsis cinerea (strain Okayama-7 / 130 / ATCC MYA-4618 / FGSC 9003) (Inky cap fungus).